The primary structure comprises 338 residues: Clathrin light chain 1 (338 aa).

Residues 1–111 form a disordered region; it reads MATFDDGDFP…NEMREEGFQR (111 aa). 2 stretches are compositionally biased toward polar residues: residues 29 to 47 and 61 to 73; these read SEAQ…SSFN and SSPN…PFES. Positions 102–111 are enriched in basic and acidic residues; sequence NEMREEGFQR. The tract at residues 102-163 is involved in binding clathrin heavy chain; that stretch reads NEMREEGFQR…TIETNKTDNR (62 aa). The stretch at 122–142 forms a coiled coil; it reads LEEKEKKEKEMRNQIITEAED. Positions 192-338 are disordered; that stretch reads IPREVPNIEK…VTEAEGTKAE (147 aa). The span at 197–212 shows a compositional bias: basic and acidic residues; that stretch reads PNIEKKRGKKDPDKKP. Pro residues predominate over residues 241–253; sequence NPPPHMMPPPPPA. Residues 254-304 show a composition bias toward basic and acidic residues; it reads KDAKDGKDAKDGKDAKTGKDGKDAKGGKDAKDLKDGKPADPKVTEEKRPSP.

Belongs to the clathrin light chain family. In terms of assembly, clathrin coats are formed from molecules containing 3 heavy chains and 3 light chains.

It localises to the cytoplasmic vesicle membrane. The protein resides in the membrane. Its subcellular location is the coated pit. In terms of biological role, clathrin is the major protein of the polyhedral coat of coated pits and vesicles. The polypeptide is Clathrin light chain 1 (Arabidopsis thaliana (Mouse-ear cress)).